Consider the following 475-residue polypeptide: MNLETIIGLEVHVELKTNSKIFSASPTEFGAEPNTQTSVIDLGYPGVLPTLNKEAVNFAMKAAMALNCEIATETKFDRKNYFYPDNPKAYQISQFDKPIGENGWIEIEVDGKKKRIGITRLHLEEDAGKSTHTADGSLVDYNRQGMPLIEIVSEPDMRTPEEAYAYLEKLKSIIQYTGVSDCKMEEGSLRCDANISLRPVGQEKFGTKAELKNLNSFTYVQKGLEHEQVRQEKELLSGGIIQQETRRYDEATKKTILMRVKEGSDDYRYFPEPDLVELYIDDEWKEAVRASIPELPDARKARYVAELGLPAYDAHVLTLTKEMSDFFEATVADGADAKLTSNWLMGEVLAYLNKQQKELKDVALTPAGLSKMVQLIEKGTISSKIAKKVFNELIEKGGDPEEIVKAKGLVQISDEGTLRKVVTEILDNNEQSIEDFKNGKDRAIGFLVGQIMKATKGQANPPLVNKILLEEINKR.

Belongs to the GatB/GatE family. GatB subfamily. As to quaternary structure, heterotrimer of A, B and C subunits.

The catalysed reaction is L-glutamyl-tRNA(Gln) + L-glutamine + ATP + H2O = L-glutaminyl-tRNA(Gln) + L-glutamate + ADP + phosphate + H(+). It carries out the reaction L-aspartyl-tRNA(Asn) + L-glutamine + ATP + H2O = L-asparaginyl-tRNA(Asn) + L-glutamate + ADP + phosphate + 2 H(+). In terms of biological role, allows the formation of correctly charged Asn-tRNA(Asn) or Gln-tRNA(Gln) through the transamidation of misacylated Asp-tRNA(Asn) or Glu-tRNA(Gln) in organisms which lack either or both of asparaginyl-tRNA or glutaminyl-tRNA synthetases. The reaction takes place in the presence of glutamine and ATP through an activated phospho-Asp-tRNA(Asn) or phospho-Glu-tRNA(Gln). The polypeptide is Aspartyl/glutamyl-tRNA(Asn/Gln) amidotransferase subunit B (Bacillus cereus (strain ZK / E33L)).